The following is a 702-amino-acid chain: Polyribonucleotide nucleotidyltransferase (702 aa).

Mg(2+) is bound by residues Asp485 and Asp491. Residues 552–612 (PRTEIICIDP…EGVKKAISII (61 aa)) enclose the KH domain. One can recognise an S1 motif domain in the interval 622 to 690 (GEIYLGKVTK…NQGRINLSRK (69 aa)).

This sequence belongs to the polyribonucleotide nucleotidyltransferase family. Mg(2+) is required as a cofactor.

The protein localises to the cytoplasm. It catalyses the reaction RNA(n+1) + phosphate = RNA(n) + a ribonucleoside 5'-diphosphate. Functionally, involved in mRNA degradation. Catalyzes the phosphorolysis of single-stranded polyribonucleotides processively in the 3'- to 5'-direction. This chain is Polyribonucleotide nucleotidyltransferase, found in Clostridium botulinum (strain ATCC 19397 / Type A).